A 244-amino-acid chain; its full sequence is Serine acetyltransferase (244 aa).

It belongs to the transferase hexapeptide repeat family.

It is found in the cytoplasm. It catalyses the reaction L-serine + acetyl-CoA = O-acetyl-L-serine + CoA. Its pathway is amino-acid biosynthesis; L-cysteine biosynthesis; L-cysteine from L-serine: step 1/2. The sequence is that of Serine acetyltransferase (cysE) from Synechococcus elongatus (strain ATCC 33912 / PCC 7942 / FACHB-805) (Anacystis nidulans R2).